The following is a 206-amino-acid chain: Guanylyl cyclase inhibitory protein (206 aa).

A lipid anchor (N-myristoyl glycine) is attached at Gly2. EF-hand domains lie at 31-49 (SGLI…VTVG), 51-86 (NSSE…LAHG), 87-122 (TPED…VYKM), and 135-170 (TAEE…DEWV). 8 residues coordinate Ca(2+): Asp64, Asn66, Asp68, Glu75, Asp100, Asp102, Asp104, and Glu111.

In terms of tissue distribution, retina; inner segments, somata and synaptic terminals of cone receptors.

Its function is as follows. Does not stimulate guanylyl cyclase (GC) when free calcium ion concentration is low, but inhibits GC when free calcium ions concentration is elevated. The chain is Guanylyl cyclase inhibitory protein (GCIP) from Lithobates pipiens (Northern leopard frog).